We begin with the raw amino-acid sequence, 719 residues long: Developmental regulator flbA (719 aa).

The span at M1–S17 shows a compositional bias: polar residues. Disordered stretches follow at residues M1–A39, I117–A141, and L155–R190. 2 stretches are compositionally biased toward low complexity: residues S123–Q135 and P158–S171. The segment at Q214–V411 is fungal-DR. One can recognise a DEP domain in the interval G425–E511. Residues S540–I685 form the RGS domain. A disordered region spans residues L694–S719.

Required for asexual sporulation and normal colony development. May be involved in brlA activation. Could play a regulatory role in controlling the flug-initiated signal transduction pathway that triggers the asexual reproduction. The sequence is that of Developmental regulator flbA (flbA) from Emericella nidulans (strain FGSC A4 / ATCC 38163 / CBS 112.46 / NRRL 194 / M139) (Aspergillus nidulans).